Here is a 520-residue protein sequence, read N- to C-terminus: UDP-N-acetylmuramoyl-L-alanyl-D-glutamate--2,6-diaminopimelate ligase (520 aa).

Position 48 (Leu-48) interacts with UDP-N-acetyl-alpha-D-muramoyl-L-alanyl-D-glutamate. Position 134–140 (134–140 (GTSGKTT)) interacts with ATP. UDP-N-acetyl-alpha-D-muramoyl-L-alanyl-D-glutamate is bound by residues 176–177 (TT), Ser-203, and Arg-211. An N6-carboxylysine modification is found at Lys-243. Residues Arg-405, 429–432 (DNPR), Gly-483, and Glu-487 contribute to the meso-2,6-diaminopimelate site. A Meso-diaminopimelate recognition motif motif is present at residues 429 to 432 (DNPR).

This sequence belongs to the MurCDEF family. MurE subfamily. It depends on Mg(2+) as a cofactor. Carboxylation is probably crucial for Mg(2+) binding and, consequently, for the gamma-phosphate positioning of ATP.

It localises to the cytoplasm. The enzyme catalyses UDP-N-acetyl-alpha-D-muramoyl-L-alanyl-D-glutamate + meso-2,6-diaminopimelate + ATP = UDP-N-acetyl-alpha-D-muramoyl-L-alanyl-gamma-D-glutamyl-meso-2,6-diaminopimelate + ADP + phosphate + H(+). The protein operates within cell wall biogenesis; peptidoglycan biosynthesis. Its function is as follows. Catalyzes the addition of meso-diaminopimelic acid to the nucleotide precursor UDP-N-acetylmuramoyl-L-alanyl-D-glutamate (UMAG) in the biosynthesis of bacterial cell-wall peptidoglycan. This Mycolicibacterium paratuberculosis (strain ATCC BAA-968 / K-10) (Mycobacterium paratuberculosis) protein is UDP-N-acetylmuramoyl-L-alanyl-D-glutamate--2,6-diaminopimelate ligase.